Consider the following 286-residue polypeptide: 2-hydroxy-6-oxo-6-phenylhexa-2,4-dienoate hydrolase (286 aa).

Substrate-binding positions include 42 to 43 (GG), Asn51, Lys111, Ser180, and Arg190. The 99-residue stretch at 173 to 271 (NVFLFDQSLI…RCVHWAQWEH (99 aa)) folds into the AB hydrolase-1 domain. His265 (proton acceptor) is an active-site residue. Trp266 provides a ligand contact to substrate.

This sequence belongs to the AB hydrolase superfamily. BphD family. Homodimer.

It catalyses the reaction 2,6-dioxo-6-phenylhexa-3-enoate + H2O = 2-oxopent-4-enoate + benzoate + H(+). Its pathway is xenobiotic degradation; biphenyl degradation; 2-hydroxy-2,4-pentadienoate and benzoate from biphenyl: step 4/4. In terms of biological role, catalyzes an unusual C-C bond hydrolysis of 2-hydroxy-6-oxo-6-phenylhexa-2,4-dienoic acid (HOPDA) to produce benzoic acid and 2-hydroxy-2,4-pentadienoic acid (HPD). This chain is 2-hydroxy-6-oxo-6-phenylhexa-2,4-dienoate hydrolase, found in Delftia acidovorans (Pseudomonas acidovorans).